The chain runs to 412 residues: Class E basic helix-loop-helix protein 40 (412 aa).

The segment at 1–139 is essential for interaction with BMAL1, E-box binding and repressor activity against the CLOCK-BMAL1 heterodimer; it reads MERIPSAQPP…LSGRNVETGQ (139 aa). One can recognise a bHLH domain in the interval 52–107; it reads TYKLPHRLIEKKRRDRINECIAQLKDLLPEHLKLTTLGHLEKAVVLELTLKHVKAL. The interval 75-79 is necessary for interaction with RXRA and repressor activity against RXRA; the sequence is LKDLL. The Orange domain maps to 142–175; it reads FCSGFQTCAREVLQYLAKHENTRDLKSSQLVTHL. Residue Lys-159 forms a Glycyl lysine isopeptide (Lys-Gly) (interchain with G-Cter in SUMO1, SUMO2 and SUMO3) linkage. A Glycyl lysine isopeptide (Lys-Gly) (interchain with G-Cter in SUMO2) cross-link involves residue Lys-167. Disordered stretches follow at residues 183 to 259 and 275 to 309; these read LQGG…SEQL and IGAI…LISS. Ser-235 bears the Phosphoserine mark. Basic and acidic residues predominate over residues 248-259; sequence ESEKGDLRSEQL. Lys-279 is covalently cross-linked (Glycyl lysine isopeptide (Lys-Gly) (interchain with G-Cter in SUMO1); alternate). A Glycyl lysine isopeptide (Lys-Gly) (interchain with G-Cter in SUMO1, SUMO2 and SUMO3); alternate cross-link involves residue Lys-279. Lys-279 participates in a covalent cross-link: Glycyl lysine isopeptide (Lys-Gly) (interchain with G-Cter in SUMO2); alternate. Lys-288 is covalently cross-linked (Glycyl lysine isopeptide (Lys-Gly) (interchain with G-Cter in SUMO2)). Phosphoserine is present on Ser-383.

As to quaternary structure, homodimer. Heterodimer with BHLHE41/DEC2. Interacts with TCF3/E47. Interacts with ubiquitin-conjugating enzyme UBE2I/UBC9. Interacts with HDAC1, SUMO1, RXRA and BMAL1. Ubiquitinated; which may lead to proteasomal degradation. Post-translationally, sumoylation inhibits its ubiquitination and promotes its negative regulation of the CLOCK-BMAL1 heterodimer transcriptional activator activity.

The protein localises to the cytoplasm. It localises to the nucleus. In terms of biological role, transcriptional repressor involved in the regulation of the circadian rhythm by negatively regulating the activity of the clock genes and clock-controlled genes. Acts as the negative limb of a novel autoregulatory feedback loop (DEC loop) which differs from the one formed by the PER and CRY transcriptional repressors (PER/CRY loop). Both these loops are interlocked as it represses the expression of PER1/2 and in turn is repressed by PER1/2 and CRY1/2. Represses the activity of the circadian transcriptional activator: CLOCK-BMAL1|BMAL2 heterodimer by competing for the binding to E-box elements (5'-CACGTG-3') found within the promoters of its target genes. Negatively regulates its own expression and the expression of DBP and BHLHE41/DEC2. Acts as a corepressor of RXR and the RXR-LXR heterodimers and represses the ligand-induced RXRA and NR1H3/LXRA transactivation activity. May be involved in the regulation of chondrocyte differentiation via the cAMP pathway. Represses the transcription of NR0B2 and attentuates the transactivation of NR0B2 by the CLOCK-BMAL1 complex. Drives the circadian rhythm of blood pressure through transcriptional repression of ATP1B1 in the cardiovascular system. This Pongo abelii (Sumatran orangutan) protein is Class E basic helix-loop-helix protein 40 (BHLHE40).